The sequence spans 541 residues: Protein wntless homolog B (541 aa).

Topologically, residues 1–15 (MAGAIIENMSTKKLC) are cytoplasmic. A helical membrane pass occupies residues 16–36 (MVGVALLLLQVLAFLVGGLIA). Residues 37–232 (PKPTTYVNPV…SIFQNGGFTM (196 aa)) are Lumenal-facing. The chain crosses the membrane as a helical span at residues 233 to 253 (VWFAMKTFLTPCIIIIMIWYW). The Cytoplasmic segment spans residues 254-268 (RRITMMTRSPVLLEK). The chain crosses the membrane as a helical span at residues 269-289 (VIFALGISMTFINIPVEWFSI). The Lumenal portion of the chain corresponds to 290–303 (GYDWTWMLLFGDIR). A helical transmembrane segment spans residues 304 to 324 (QGIFYAMLLSFWIIFCGEHMM). Over 325–331 (DQAERNR) the chain is Cytoplasmic. Residues 332–352 (ISIYWKQVGPIAFGSCCLFIF) form a helical membrane-spanning segment. Residues 353-379 (DMCERGVQLKNPFYSIWTTDVGAEIAM) are Lumenal-facing. A helical transmembrane segment spans residues 380–400 (AFIIVAGICACLYFLFLCFMV). Over 401–431 (YQVFRNISGKRSNLPAMSKARRLHYEGLIFR) the chain is Cytoplasmic. A helical membrane pass occupies residues 432-452 (FKFLMIITLACAALTVVFFIT). Over 453-471 (TQITEGNWKLGDLSIELNS) the chain is Lumenal. The chain crosses the membrane as a helical span at residues 472–492 (AFFTGIYGMWNLYVFALMFLY). At 493-541 (APSHKHYGDGQSNDGAGMSSGEELQLTTTITHIDGPTELYRLAGKEAQE) the chain is on the cytoplasmic side.

It belongs to the wntless family. As to expression, enriched in the animal hemisphere of the early cleavage embryo, where expression persists until the late gastrula stage. At the neurula stage, strongly expressed at the border of the neural plate and dorsal midline. After the neurula stage, expressed in various organs, including the eye, liver, heart, pronephros, otic vesicle, and dorsal neural tube. Expression in the developing eye is dynamic; expressed in the eye field from stages 23 to 27, and from stage 30 expression is confined to distinct regions including the central part and border of the eye.

The protein localises to the golgi apparatus membrane. The protein resides in the cytoplasmic vesicle membrane. Its function is as follows. Required for a subset of Wnt-dependent developmental processes, in particular, eye and pronephros development. Regulates the secretion of wnt4, which is required for eye development. The sequence is that of Protein wntless homolog B (wls-b) from Xenopus laevis (African clawed frog).